A 2591-amino-acid polypeptide reads, in one-letter code: Eukaryotic translation initiation factor 2-alpha kinase PK4 (2591 aa).

Topologically, residues 1-16 (MYNKGINICLNEDNKC) are cytoplasmic. Residues 17 to 37 (IILLHIIFNKCIVSFVASHIL) traverse the membrane as a helical segment. The Lumenal portion of the chain corresponds to 38–1488 (VEGKICFLNR…EFSSQKHKKS (1451 aa)). Residues 1028–1048 (KKKRNSKKGENRNKKRKTQKR) are disordered. Residues 1489–1509 (WYWNIFYAITLVIVIPFIFIY) form a helical membrane-spanning segment. At 1510-2591 (RLFKKQTNNK…NIINGNEVDH (1082 aa)) the chain is on the cytoplasmic side. The segment at 1781-1840 (NLNSADEENKSPYAKKYSDEKKNRSKSSKYIENTQSNNNDNTNGNMNVGNHINNDKMNNK) is disordered. Over residues 1813–1832 (NTQSNNNDNTNGNMNVGNHI) the composition is skewed to low complexity. ATP is bound by residues 1880 to 1888 (IGQGGFGSV) and K1905. Disordered stretches follow at residues 2123–2157 (DNDE…GGDI) and 2183–2212 (IKNT…TNNN). Over residues 2134–2143 (KKNDNDERKS) the composition is skewed to basic and acidic residues. Residues 2181–2532 (MTIKNTQGTS…KIKVLLDPHL (352 aa)) enclose the Protein kinase domain. Residue D2369 is the Proton acceptor of the active site. The residue at position 2436 (T2436) is a Phosphothreonine; by autocatalysis. Residues 2558-2574 (STNPNGDIKENVNQNNL) show a composition bias toward polar residues. Residues 2558 to 2591 (STNPNGDIKENVNQNNLVDDKGNNNIINGNEVDH) are disordered. Residues 2580-2591 (NNNIINGNEVDH) are compositionally biased toward low complexity.

The protein belongs to the protein kinase superfamily. Ser/Thr protein kinase family. GCN2 subfamily. May form oligomers in response to stress; oligomerization may result in catalytic activity. Interacts with BIP; the interaction is disrupted in response to stress.

It localises to the endoplasmic reticulum membrane. It catalyses the reaction L-seryl-[protein] + ATP = O-phospho-L-seryl-[protein] + ADP + H(+). The enzyme catalyses L-threonyl-[protein] + ATP = O-phospho-L-threonyl-[protein] + ADP + H(+). With respect to regulation, dissociation from BIP and oligomerization, may results autophosphorylation and kinase activity induction. In terms of biological role, during the asexual blood stage, phosphorylates translation factor eIF2alpha in late schizonts resulting in protein translation inhibition. Plays a role in trophozoite differentiation into schizonts. The polypeptide is Eukaryotic translation initiation factor 2-alpha kinase PK4 (Plasmodium berghei (strain Anka)).